The chain runs to 772 residues: Endoplasmic reticulum membrane sensor NFE2L1 (772 aa).

A helical; Signal-anchor for type II membrane protein membrane pass occupies residues 7–24; it reads YFTEGLIQFTILLSLIGV. The tract at residues 191-199 is cholesterol recognition/amino acid consensus (CRAC) region; sequence IFDYSHRQK. Residues 198–216 show a composition bias toward basic and acidic residues; the sequence is QKESEVDKELSDGRERGDG. The disordered stretch occupies residues 198–223; that stretch reads QKESEVDKELSDGRERGDGWRSAGGQ. N-linked (GlcNAc...) asparagine glycosylation is found at N332, N340, N362, N402, N407, N414, N425, and N429. The segment at 472–531 is disordered; sequence EEEFDSDSGLSLDSGHSPASLSSSEASSSSSSSSSSSSSSSSSSSSFSEEGAVGYSSDSE. Low complexity predominate over residues 478–519; that stretch reads DSGLSLDSGHSPASLSSSEASSSSSSSSSSSSSSSSSSSSFS. N574 is a glycosylation site (N-linked (GlcNAc...) asparagine). The interval 581-613 is disordered; sequence PGTLDPEEPKLPSVGKKSSKEKPSEFLDKQMSR. Positions 598 to 613 are enriched in basic and acidic residues; the sequence is SSKEKPSEFLDKQMSR. Residues 654–717 form the bZIP domain; sequence LIRDIRRRGK…RQMKQKVQNL (64 aa). Residues 656–675 form a basic motif region; that stretch reads RDIRRRGKNKMAAQNCRKRK. Residues 682–696 form a leucine-zipper region; that stretch reads LERDVEDLQRDKSKL. Positions 761 to 768 match the Nuclear localization signal motif; it reads RRQERKQK.

It belongs to the bZIP family. CNC subfamily. As to quaternary structure, interacts (via the bZIP domain) with small MAF protein (MAFF, MAFG or MAFK); required for binding to antioxidant response elements (AREs) on DNA. Cleaved at Leu-104 following retrotranslocation, releasing the protein from the endoplasmic reticulum membrane and forming the transcription factor NRF1 that translocates into the nucleus.

It localises to the endoplasmic reticulum membrane. Its subcellular location is the nucleus. In terms of biological role, endoplasmic reticulum membrane sensor that translocates into the nucleus in response to various stresses to act as a transcription factor. Constitutes a precursor of the transcription factor NRF1. Able to detect various cellular stresses, such as cholesterol excess, oxidative stress or proteasome inhibition. In response to stress, it is released from the endoplasmic reticulum membrane following cleavage and translocates into the nucleus to form the transcription factor NRF1. Acts as a key sensor of cholesterol excess: in excess cholesterol conditions, the endoplasmic reticulum membrane form of the protein directly binds cholesterol via its CRAC motif, preventing cleavage and release of the transcription factor NRF1, thereby allowing expression of genes promoting cholesterol removal. Involved in proteasome homeostasis: in response to proteasome inhibition, it is released from the endoplasmic reticulum membrane, translocates to the nucleus and activates expression of genes encoding proteasome subunits. Functionally, CNC-type bZIP family transcription factor that translocates to the nucleus and regulates expression of target genes in response to various stresses. Heterodimerizes with small-Maf proteins (MAFF, MAFG or MAFK) and binds DNA motifs including the antioxidant response elements (AREs), which regulate expression of genes involved in oxidative stress response. Activates or represses expression of target genes, depending on the context. Plays a key role in cholesterol homeostasis by acting as a sensor of cholesterol excess: in low cholesterol conditions, translocates into the nucleus and represses expression of genes involved in defense against cholesterol excess. In excess cholesterol conditions, the endoplasmic reticulum membrane form of the protein directly binds cholesterol via its CRAC motif, preventing cleavage and release of the transcription factor NRF1, thereby allowing expression of genes promoting cholesterol removal. Critical for redox balance in response to oxidative stress: acts by binding the AREs motifs on promoters and mediating activation of oxidative stress response genes. Involved in proteasome homeostasis: in response to proteasome inhibition, mediates the 'bounce-back' of proteasome subunits by translocating into the nucleus and activating expression of genes encoding proteasome subunits. The protein is Endoplasmic reticulum membrane sensor NFE2L1 of Gallus gallus (Chicken).